A 208-amino-acid chain; its full sequence is Outer-membrane lipoprotein carrier protein (208 aa).

The signal sequence occupies residues 1–22 (MKNLLCAVMLTSPLLYSTAVFA).

The protein belongs to the LolA family. Monomer.

It is found in the periplasm. Participates in the translocation of lipoproteins from the inner membrane to the outer membrane. Only forms a complex with a lipoprotein if the residue after the N-terminal Cys is not an aspartate (The Asp acts as a targeting signal to indicate that the lipoprotein should stay in the inner membrane). In Shewanella putrefaciens (strain CN-32 / ATCC BAA-453), this protein is Outer-membrane lipoprotein carrier protein.